A 689-amino-acid polypeptide reads, in one-letter code: Dipeptidyl aminopeptidase BIII (689 aa).

The signal sequence occupies residues Met-1–Ala-26. Active-site charge relay system residues include Ser-506, Asp-593, and His-625.

It belongs to the peptidase S9C family. Monomer.

With respect to regulation, strongly inhibited by the serine protease inhibitor diisopropyl fluorophosphate (DFP), chymostatin, leupeptin, 0.5 mM ZnCl(2), 10 mM o-phenanthlorine and N-tosyl-L-phenyl-alanyl chloromethyl ketone (TPCK), but not by N-tosyl-L-lysyl chloromethyl ketone (TLCK). Activity is not affected significantly by iodoacetate (IAA), L-trans-epoxysuccinyl-leucylamido(4-guanido)butane (E64), pepstatin A and phenylmethanesulfonyl fluoride (PMSF). Activity is stimulated by addition of 0.5 mM CaCl(2), 10 mM EDTA and N-ethylmaleimide (NEM). Exopeptidase that catalyzes the removal of dipeptide units (NH2-P2-P1- or -P1'-P2'-COOH) from the free amino or carboxy termini. Prefers substrates composed of bulky, hydrophobic amino acids at P1 and P1' positions. Has endopeptidase activity on N-terminally blocked peptide derivatives which contain aromatic amino acid residue at the P1 position. Exopeptidase activity is much higher than its endopeptidase activity. The polypeptide is Dipeptidyl aminopeptidase BIII (Pseudoxanthomonas mexicana).